The sequence spans 451 residues: Tapasin-related protein (451 aa).

The N-terminal stretch at 1–20 is a signal peptide; it reads MGLEPSWYLLLCLAVSGAAG. Residues 21 to 412 lie on the Lumenal side of the membrane; that stretch reads TDPPTAPTTA…RVLPNPEQRG (392 aa). The Ig-like V-type domain occupies 196–301; sequence FQVTSETQTL…TSLYQAQQIM (106 aa). 2 disulfides stabilise this stretch: Cys-217/Cys-288 and Cys-326/Cys-387. N-linked (GlcNAc...) asparagine glycosylation is found at Asn-270 and Asn-277. The Ig-like C1-type domain maps to 302 to 399; that stretch reads PLNILAPPKI…AHVSLEEPLT (98 aa). A helical transmembrane segment spans residues 413-433; sequence TLGVIFASIIFLSALLLFLGL. At 434 to 451 the chain is on the cytoplasmic side; sequence HRQQASSSRSTRPMRHSG.

Interacts with peptide-free HLA-A*02-B2M complexes or those loaded with low affinity peptides, likely facilitating peptide exchange onto higher affinity peptides. Interacts with MR1 in a ligand-independent way; this interaction may stabilize MR1 pool and facilitate ligand loading and dissociation. In terms of tissue distribution, widely expressed.

It is found in the cell membrane. The protein resides in the endoplasmic reticulum membrane. Its subcellular location is the microsome membrane. It localises to the golgi apparatus membrane. Functionally, component of the antigen processing and presentation pathway, which binds to MHC class I coupled with beta2-microglobulin/B2M. Association between TAPBPR and MHC class I occurs in the absence of a functional peptide-loading complex (PLC). Expression seems to slow down and down-regulate MHC class I surface expression. The polypeptide is Tapasin-related protein (Tapbpl) (Mus musculus (Mouse)).